Consider the following 329-residue polypeptide: Two pore potassium channel protein sup-9 (329 aa).

Over 1–8 the chain is Cytoplasmic; sequence MKRQNIRT. The helical transmembrane segment at 9–29 threads the bilayer; sequence LSLIVCTLTYLLVGAAVFDAL. A glycan (N-linked (GlcNAc...) asparagine) is linked at asparagine 53. An intramembrane region (pore-forming) is located at residues 80 to 100; that stretch reads FSGAFYFATTVITTIGYGHST. A Selectivity filter motif is present at residues 93–98; the sequence is TIGYGH. The chain crosses the membrane as a helical span at residues 108–128; sequence VFCMLYALAGIPLGLIMFQSI. Residues 129–157 lie on the Cytoplasmic side of the membrane; sequence GERMNTFAAKLLRFIRRAAGKQPIVTSSD. The helical transmembrane segment at 158–178 threads the bilayer; that stretch reads LIIFCTGWGGLLIFGGAFMFS. Residue asparagine 182 is glycosylated (N-linked (GlcNAc...) asparagine). The pore-forming intramembrane region spans 186-206; that stretch reads FDAVYYCFVTLTTIGFGDYVA. Residues 198–203 carry the Selectivity filter motif; that stretch reads TIGFGD. A helical membrane pass occupies residues 220-240; that stretch reads VFFSLVFILFGLTVISAAMNL. Residues 241-329 are Cytoplasmic-facing; sequence LVLRFLTMNT…FSGMTTRPKY (89 aa). The may be important for regulation by and/or interaction with sup-10 stretch occupies residues 289–296; the sequence is SLASCSCY. The interval 307–329 is disordered; sequence HRKHTEPHGGPPTFSGMTTRPKY.

Belongs to the two pore domain potassium channel (TC 1.A.1.8) family. May form a complex with the regulatory subunits unc-93 and sup-10. Low levels along surface of body-wall muscle cells, in vulval and intestinal muscles and, more weakly, in anal depressor and sphincter muscles. Also expressed in a subset of head neurons.

Its subcellular location is the membrane. Functionally, potassium channel involved in coordination of muscle contraction. Activity is regulated by sup-18. This Caenorhabditis elegans protein is Two pore potassium channel protein sup-9.